The following is a 149-amino-acid chain: Nucleoside diphosphate kinase (149 aa).

Residues Lys-9, Phe-57, Arg-85, Thr-91, Arg-102, and Asn-112 each contribute to the ATP site. Residue His-115 is the Pros-phosphohistidine intermediate of the active site.

The protein belongs to the NDK family. In terms of assembly, homotetramer. The cofactor is Mg(2+).

It localises to the cytoplasm. It carries out the reaction dZDP + ATP = dZTP + ADP. The enzyme catalyses a 2'-deoxyribonucleoside 5'-diphosphate + ATP = a 2'-deoxyribonucleoside 5'-triphosphate + ADP. The catalysed reaction is a ribonucleoside 5'-diphosphate + ATP = a ribonucleoside 5'-triphosphate + ADP. The protein operates within purine metabolism. Major role in the synthesis of nucleoside triphosphates other than ATP. The ATP gamma phosphate is transferred to the NDP beta phosphate via a ping-pong mechanism, using a phosphorylated active-site intermediate. Functionally, (Microbial infection) Catalyzes the phosphorylation of dZDP to dZTP, when the bacterium is infected by a phage that produces the substrate for the synthesis of dZTP (2- amino-2'-deoxyadenosine 5'-triphosphate), which is then used by the phage as a DNA polymerase substrate. This chain is Nucleoside diphosphate kinase, found in Synechococcus sp. (strain JA-3-3Ab) (Cyanobacteria bacterium Yellowstone A-Prime).